We begin with the raw amino-acid sequence, 257 residues long: Imidazole glycerol phosphate synthase subunit HisF (257 aa).

Active-site residues include Asp-11 and Asp-130.

This sequence belongs to the HisA/HisF family. Heterodimer of HisH and HisF.

The protein resides in the cytoplasm. The catalysed reaction is 5-[(5-phospho-1-deoxy-D-ribulos-1-ylimino)methylamino]-1-(5-phospho-beta-D-ribosyl)imidazole-4-carboxamide + L-glutamine = D-erythro-1-(imidazol-4-yl)glycerol 3-phosphate + 5-amino-1-(5-phospho-beta-D-ribosyl)imidazole-4-carboxamide + L-glutamate + H(+). It functions in the pathway amino-acid biosynthesis; L-histidine biosynthesis; L-histidine from 5-phospho-alpha-D-ribose 1-diphosphate: step 5/9. In terms of biological role, IGPS catalyzes the conversion of PRFAR and glutamine to IGP, AICAR and glutamate. The HisF subunit catalyzes the cyclization activity that produces IGP and AICAR from PRFAR using the ammonia provided by the HisH subunit. This chain is Imidazole glycerol phosphate synthase subunit HisF, found in Mannheimia succiniciproducens (strain KCTC 0769BP / MBEL55E).